The chain runs to 150 residues: Large ribosomal subunit protein uL15 (150 aa).

The interval 1-57 (MTLRLESLKPNKGARRRKLRKGRGIAAGQGASCGFGMRGQKSRSGRPTRPGFEGGQM) is disordered. A compositionally biased stretch (basic residues) spans 12–23 (KGARRRKLRKGR). Residues 25-37 (IAAGQGASCGFGM) are compositionally biased toward gly residues.

It belongs to the universal ribosomal protein uL15 family. Part of the 50S ribosomal subunit.

Binds to the 23S rRNA. This is Large ribosomal subunit protein uL15 from Synechococcus sp. (strain CC9311).